The sequence spans 276 residues: MAIKKYKPTSAGRRNMSVSDFAEITTDKPEKSLLAPLHKKGGRNNQGRLTVRHQGGGHKRQYRVIDFKRNKDGIPGRVATIEYDPNRSANIALINYADGEKRYILAPKGLTVGTVIVSGPDADIKTGNALPLANIPVGTVIHNIELRPGKGGQLVRSAGTEAQLLGKEGDYALVRLNSGETRYILSTCRATIGQVGNVEHELINIGKAGRSRWKGIRPTVRGSVMNPNDHPHGGGEGKAPIGRPSPMSPWGKPTLGYKTRKKNKHSDKYIVRRRKK.

Disordered stretches follow at residues 35–55 and 222–276; these read APLH…RHQG and GSVM…RRKK. Residues 258–276 show a composition bias toward basic residues; it reads KTRKKNKHSDKYIVRRRKK.

This sequence belongs to the universal ribosomal protein uL2 family. As to quaternary structure, part of the 50S ribosomal subunit. Forms a bridge to the 30S subunit in the 70S ribosome.

Its function is as follows. One of the primary rRNA binding proteins. Required for association of the 30S and 50S subunits to form the 70S ribosome, for tRNA binding and peptide bond formation. It has been suggested to have peptidyltransferase activity; this is somewhat controversial. Makes several contacts with the 16S rRNA in the 70S ribosome. This chain is Large ribosomal subunit protein uL2, found in Shouchella clausii (strain KSM-K16) (Alkalihalobacillus clausii).